The sequence spans 95 residues: Large ribosomal subunit protein bL27 (95 aa).

The propeptide occupies 1 to 8 (MEMNLQFF). The disordered stretch occupies residues 1-34 (MEMNLQFFSHHKGGGSTSNGRDSAGRRLGTKRAD).

Belongs to the bacterial ribosomal protein bL27 family. The N-terminus is cleaved by ribosomal processing cysteine protease Prp.

This is Large ribosomal subunit protein bL27 from Pediococcus pentosaceus (strain ATCC 25745 / CCUG 21536 / LMG 10740 / 183-1w).